Consider the following 267-residue polypeptide: 4-hydroxy-tetrahydrodipicolinate reductase (267 aa).

Residues 8 to 13 and D34 contribute to the NAD(+) site; that span reads GAAGRM. An NADP(+)-binding site is contributed by R35. Residues 98-100 and 122-125 contribute to the NAD(+) site; these read GTT and AANF. The active-site Proton donor/acceptor is H155. H156 lines the (S)-2,3,4,5-tetrahydrodipicolinate pocket. K159 (proton donor) is an active-site residue. 165 to 166 contacts (S)-2,3,4,5-tetrahydrodipicolinate; the sequence is GT.

This sequence belongs to the DapB family.

It localises to the cytoplasm. It catalyses the reaction (S)-2,3,4,5-tetrahydrodipicolinate + NAD(+) + H2O = (2S,4S)-4-hydroxy-2,3,4,5-tetrahydrodipicolinate + NADH + H(+). The catalysed reaction is (S)-2,3,4,5-tetrahydrodipicolinate + NADP(+) + H2O = (2S,4S)-4-hydroxy-2,3,4,5-tetrahydrodipicolinate + NADPH + H(+). Its pathway is amino-acid biosynthesis; L-lysine biosynthesis via DAP pathway; (S)-tetrahydrodipicolinate from L-aspartate: step 4/4. In terms of biological role, catalyzes the conversion of 4-hydroxy-tetrahydrodipicolinate (HTPA) to tetrahydrodipicolinate. The polypeptide is 4-hydroxy-tetrahydrodipicolinate reductase (Pseudomonas putida (strain ATCC 700007 / DSM 6899 / JCM 31910 / BCRC 17059 / LMG 24140 / F1)).